The chain runs to 969 residues: Protein translocase subunit SecA (969 aa).

Residues Gln-99, 117–121, and Asp-631 each bind ATP; that span reads GEGKT.

Belongs to the SecA family. As to quaternary structure, monomer and homodimer. Part of the essential Sec protein translocation apparatus which comprises SecA, SecYEG and auxiliary proteins SecDF. Other proteins may also be involved.

Its subcellular location is the cell inner membrane. The protein localises to the cytoplasm. It carries out the reaction ATP + H2O + cellular proteinSide 1 = ADP + phosphate + cellular proteinSide 2.. Functionally, part of the Sec protein translocase complex. Interacts with the SecYEG preprotein conducting channel. Has a central role in coupling the hydrolysis of ATP to the transfer of proteins into and across the cell membrane, serving as an ATP-driven molecular motor driving the stepwise translocation of polypeptide chains across the membrane. The chain is Protein translocase subunit SecA from Chlamydia felis (strain Fe/C-56) (Chlamydophila felis).